Consider the following 98-residue polypeptide: ESAT-6-like protein EsxK (98 aa).

The protein belongs to the WXG100 family. CFP-10 subfamily. Strongly interacts with EsxL to form a heterodimeric complex under reducing conditions.

The protein resides in the secreted. The polypeptide is ESAT-6-like protein EsxK (Mycobacterium tuberculosis (strain CDC 1551 / Oshkosh)).